We begin with the raw amino-acid sequence, 374 residues long: Probable neutral protease 2 homolog TRV_05367 (374 aa).

Positions 1–19 are cleaved as a signal peptide; it reads MQVIVALAALGSLAAPALG. Residues 20-189 constitute a propeptide that is removed on maturation; the sequence is FSIPRGVPVS…RGPLTRINKR (170 aa). Intrachain disulfides connect cysteine 197–cysteine 267 and cysteine 274–cysteine 292. Histidine 317 is a binding site for Zn(2+). The active site involves glutamate 318. Zn(2+)-binding residues include histidine 321 and aspartate 332.

It belongs to the peptidase M35 family. Zn(2+) serves as cofactor.

The protein localises to the secreted. The catalysed reaction is Preferential cleavage of bonds with hydrophobic residues in P1'. Also 3-Asn-|-Gln-4 and 8-Gly-|-Ser-9 bonds in insulin B chain.. Functionally, probable secreted metalloprotease that shows high activities on basic nuclear substrates such as histone and protamine. May be involved in virulence. This is Probable neutral protease 2 homolog TRV_05367 from Trichophyton verrucosum (strain HKI 0517).